The following is a 512-amino-acid chain: Cytochrome P450 4d1 (512 aa).

Residues glutamate 316 and cysteine 456 each contribute to the heme site.

The protein belongs to the cytochrome P450 family. The cofactor is heme.

It localises to the endoplasmic reticulum membrane. It is found in the microsome membrane. In terms of biological role, involved in the metabolism of insect hormones and in the breakdown of synthetic insecticides. This Drosophila melanogaster (Fruit fly) protein is Cytochrome P450 4d1 (Cyp4d1).